The following is a 197-amino-acid chain: Casparian strip membrane protein 5 (197 aa).

The Cytoplasmic segment spans residues 1-34 (MSTTIDMPGSSKAAKAGKPVLVTTPSRPGGWKKG). The helical transmembrane segment at 35–55 (VAIMDFILRLGAIAAALGAAA) threads the bilayer. Residues 56-84 (TMGLSDQTLPFFTQFFQFEASYDSFTTFQ) are Extracellular-facing. Residues 85–105 (FFVITMALVAGYLVLSLPLSI) traverse the membrane as a helical segment. The Cytoplasmic segment spans residues 106–117 (VAVVRPHAAGPR). A helical transmembrane segment spans residues 118–138 (LFLIILDTVFLTLATASGASA). Over 139–171 (ASIVYLAHNGNQDTNWIAICNQFGDFCAQTSGA) the chain is Extracellular. Residues 172 to 192 (VVSSLVAVLVFVLLIVMSALV) form a helical membrane-spanning segment. The Cytoplasmic portion of the chain corresponds to 193-197 (LGKKH).

The protein belongs to the Casparian strip membrane proteins (CASP) family. In terms of assembly, homodimer and heterodimers.

The protein resides in the cell membrane. Regulates membrane-cell wall junctions and localized cell wall deposition. Required for establishment of the Casparian strip membrane domain (CSD) and the subsequent formation of Casparian strips, a cell wall modification of the root endodermis that determines an apoplastic barrier between the intraorganismal apoplasm and the extraorganismal apoplasm and prevents lateral diffusion. This Lotus japonicus (Lotus corniculatus var. japonicus) protein is Casparian strip membrane protein 5.